The chain runs to 360 residues: Phospho-N-acetylmuramoyl-pentapeptide-transferase (360 aa).

Helical transmembrane passes span 21 to 41, 73 to 93, 94 to 114, 132 to 152, 168 to 188, 199 to 219, 236 to 256, 263 to 283, 288 to 308, and 338 to 358; these read YLSFRAILSVLTALGLSLWMG, TMGGVMILAAISITILLWANL, SNPYVWAVLAVLMGYGAVGFV, WKYFWQSAIALVVAFALYAYG, VMPQLGLMYIVLTYFVIVGTS, GLAIMPTVLVAAGFAVIAWAT, ASELVVVCTAIVGAGLGFLWF, VFMGDVGSLALGGALGTIAVL, LVLVIMGGVFVMETLSVILQV, and VIVRFWIISMVLVLIGLATLK.

This sequence belongs to the glycosyltransferase 4 family. MraY subfamily. Mg(2+) is required as a cofactor.

It localises to the cell inner membrane. It catalyses the reaction UDP-N-acetyl-alpha-D-muramoyl-L-alanyl-gamma-D-glutamyl-meso-2,6-diaminopimeloyl-D-alanyl-D-alanine + di-trans,octa-cis-undecaprenyl phosphate = di-trans,octa-cis-undecaprenyl diphospho-N-acetyl-alpha-D-muramoyl-L-alanyl-D-glutamyl-meso-2,6-diaminopimeloyl-D-alanyl-D-alanine + UMP. It functions in the pathway cell wall biogenesis; peptidoglycan biosynthesis. Catalyzes the initial step of the lipid cycle reactions in the biosynthesis of the cell wall peptidoglycan: transfers peptidoglycan precursor phospho-MurNAc-pentapeptide from UDP-MurNAc-pentapeptide onto the lipid carrier undecaprenyl phosphate, yielding undecaprenyl-pyrophosphoryl-MurNAc-pentapeptide, known as lipid I. This Vibrio vulnificus (strain YJ016) protein is Phospho-N-acetylmuramoyl-pentapeptide-transferase.